The following is a 234-amino-acid chain: MMSHSFVQISDCHIDNVEYAMGVNTHVNLKKIINKIINIDTDALLISGDLTHNGTITSYKTLQQILFPVQIKLLVISGNHDIDNNLNTIFSKNLFSQFTLRKWEIISTNSVQTSKTSGFLTKNELKKLNFNLTQSIAKYILIVLHHPIVPMNSTWDDSLSLENPKALFNVLDKYPKIQAILFGHAHQAAEFSRLGVKIISCPSTALQFNNETRIGFNHYTLYDNGQLTIDTQWI.

7 residues coordinate Fe cation: D11, H13, D49, N79, H145, H184, and H186. AMP contacts are provided by residues H13, D49, and 79–80; that span reads NH. H186 contacts AMP.

This sequence belongs to the cyclic nucleotide phosphodiesterase class-III family. Fe(2+) is required as a cofactor.

In Ruthia magnifica subsp. Calyptogena magnifica, this protein is Probable cyclic nucleotide phosphodiesterase Rmag_0669.